We begin with the raw amino-acid sequence, 213 residues long: Probable nicotinate-nucleotide adenylyltransferase (213 aa).

This sequence belongs to the NadD family.

It carries out the reaction nicotinate beta-D-ribonucleotide + ATP + H(+) = deamido-NAD(+) + diphosphate. It functions in the pathway cofactor biosynthesis; NAD(+) biosynthesis; deamido-NAD(+) from nicotinate D-ribonucleotide: step 1/1. Its function is as follows. Catalyzes the reversible adenylation of nicotinate mononucleotide (NaMN) to nicotinic acid adenine dinucleotide (NaAD). The chain is Probable nicotinate-nucleotide adenylyltransferase from Escherichia coli O139:H28 (strain E24377A / ETEC).